The sequence spans 288 residues: MLKSYLSITKPGIIFGNLISVAAGFFLAAKSEPASLMLFLTTLAGVGLVIASGCVVNNIFDRDIDQKMARTQNRETVKGNINIDVAFVYALAMLLLGTALLFQLVNPLSAVVVLLGYVYYVFFYTMWYKRNSVYGTLVGSISGAVPPLVGYLAVTNFISLEAILLFTMFCLWQMPHSYAIAMFRMQDYREAGIPVLPVKDGIHKAHRHMKAYVVAFGAVSLGLFLLGEAGYEYLAVAAVVCLMWTKVTFRSIDESNYVVWSKSVFKVSLLVVMGISGVLGVELIPLAL.

The next 9 membrane-spanning stretches (helical) occupy residues 8–28 (ITKP…FFLA), 36–56 (LMLF…GCVV), 85–105 (VAFV…FQLV), 108–128 (LSAV…TMWY), 131–151 (NSVY…LVGY), 152–172 (LAVT…FCLW), 211–231 (AYVV…EAGY), 233–252 (YLAV…FRSI), and 267–287 (VSLL…IPLA).

Belongs to the UbiA prenyltransferase family. Protoheme IX farnesyltransferase subfamily.

The protein localises to the cell inner membrane. The catalysed reaction is heme b + (2E,6E)-farnesyl diphosphate + H2O = Fe(II)-heme o + diphosphate. Its pathway is porphyrin-containing compound metabolism; heme O biosynthesis; heme O from protoheme: step 1/1. Converts heme B (protoheme IX) to heme O by substitution of the vinyl group on carbon 2 of heme B porphyrin ring with a hydroxyethyl farnesyl side group. The sequence is that of Protoheme IX farnesyltransferase 2 from Vibrio parahaemolyticus serotype O3:K6 (strain RIMD 2210633).